Consider the following 202-residue polypeptide: D-alanyl-D-alanine dipeptidase (202 aa).

H116 and D123 together coordinate Zn(2+). E181 serves as the catalytic Proton donor/acceptor. H184 contributes to the Zn(2+) binding site.

Belongs to the peptidase M15D family. Homodimer. Zn(2+) serves as cofactor. Requires Fe(2+) as cofactor. The cofactor is Co(2+). It depends on Ni(2+) as a cofactor.

It catalyses the reaction D-alanyl-D-alanine + H2O = 2 D-alanine. Its activity is regulated as follows. Inhibited by aminoalkyl phosphinate analogs. Functionally, catalyzes hydrolysis of the D-alanyl-D-alanine dipeptide. In Enterococcus faecium (Streptococcus faecium), this protein is D-alanyl-D-alanine dipeptidase (vanX).